A 279-amino-acid chain; its full sequence is Pantothenate synthetase (279 aa).

Residue 26–33 (MGNLHEGH) coordinates ATP. His33 (proton donor) is an active-site residue. Gln57 is a binding site for (R)-pantoate. Gln57 provides a ligand contact to beta-alanine. 144–147 (GKKD) contacts ATP. Residue Gln150 coordinates (R)-pantoate. ATP-binding positions include Val173 and 181 to 184 (LSSR).

Belongs to the pantothenate synthetase family. In terms of assembly, homodimer.

Its subcellular location is the cytoplasm. The catalysed reaction is (R)-pantoate + beta-alanine + ATP = (R)-pantothenate + AMP + diphosphate + H(+). It participates in cofactor biosynthesis; (R)-pantothenate biosynthesis; (R)-pantothenate from (R)-pantoate and beta-alanine: step 1/1. Catalyzes the condensation of pantoate with beta-alanine in an ATP-dependent reaction via a pantoyl-adenylate intermediate. This is Pantothenate synthetase from Burkholderia ambifaria (strain ATCC BAA-244 / DSM 16087 / CCUG 44356 / LMG 19182 / AMMD) (Burkholderia cepacia (strain AMMD)).